Consider the following 309-residue polypeptide: Protein FdhE (309 aa).

The protein belongs to the FdhE family.

Its subcellular location is the cytoplasm. Functionally, necessary for formate dehydrogenase activity. The sequence is that of Protein FdhE from Escherichia coli O139:H28 (strain E24377A / ETEC).